Consider the following 193-residue polypeptide: Cbp/p300-interacting transactivator 1 (193 aa).

Disordered regions lie at residues 1–26, 50–88, and 106–147; these read MPTTSRPALDVKGGTSPAKEDANQEM, VASNGTKASGAPTSSSGSPIGSPTTTPPTKPPSFNLHPA, and GMAA…SPAI. Low complexity predominate over residues 54–73; sequence GTKASGAPTSSSGSPIGSPT. A Nuclear export signal motif is present at residues 158–167; sequence LMSLVVELGL.

This sequence belongs to the CITED family. As to quaternary structure, interacts (via C-terminus) with CREBBP. Interacts with EGR2. Homodimer. Binds to RBM14. Interacts (via N-terminus) with HSPA8; the interaction suppresses the association of CITED1 with p300/CBP and SMAD-mediated transcription transactivation. Interacts (via C-terminus) with TOX3 (via HGM box); the interaction increases estrogen-response element (ERE)-dependent transcription and protection against cell death. Interacts with ESR1; the interaction occurs in a estrogen-dependent manner. Interacts (unphosphorylated form preferentially and via C-terminus) with EP300. In terms of processing, phosphorylated. Phosphorylation changes in a cell cycle-dependent manner and reduces its transcriptional coactivator activity. Expressed only in melanocytes and testis.

The protein localises to the nucleus. The protein resides in the cytoplasm. Transcriptional coactivator of the p300/CBP-mediated transcription complex. Enhances SMAD-mediated transcription by strengthening the functional link between the DNA-binding SMAD transcription factors and the p300/CBP transcription coactivator complex. Stimulates estrogen-dependent transactivation activity mediated by estrogen receptors signaling; stabilizes the interaction of estrogen receptor ESR1 and histone acetyltransferase EP300. Positively regulates TGF-beta signaling through its association with the SMAD/p300/CBP-mediated transcriptional coactivator complex. Induces transcription from estrogen-responsive promoters and protection against cell death. Potentiates EGR2-mediated transcriptional activation activity from the ERBB2 promoter. Acts as an inhibitor of osteoblastic mineralization through a cAMP-dependent parathyroid hormone receptor signaling. May play a role in pigmentation of melanocytes. Associates with chromatin to the estrogen-responsive TGF-alpha promoter region in a estrogen-dependent manner. The protein is Cbp/p300-interacting transactivator 1 (CITED1) of Homo sapiens (Human).